We begin with the raw amino-acid sequence, 52 residues long: Lantibiotic epidermin (52 aa).

Residues 1 to 30 (MEAVKEKNDLFNLDVKVNAKESNDSGAEPR) constitute a propeptide that is removed on maturation. Residues 33 to 37 (SKFIC) constitute a cross-link (lanthionine (Ser-Cys)). The segment at residues 38 to 41 (TPGC) is a cross-link (beta-methyllanthionine (Thr-Cys)). (Z)-2,3-didehydrobutyrine is present on threonine 44. Positions 46-51 (SFNSYC) form a cross-link, lanthionine (Ser-Cys). Positions 49 to 52 (SYCC) form a cross-link, S-(2-aminovinyl)-D-cysteine (Ser-Cys).

The protein belongs to the type A lantibiotic family. In terms of processing, maturation of lantibiotics involves the enzymatic conversion of Thr, and Ser into dehydrated AA and the formation of thioether bonds with cysteine. The C-terminal lanthionine undergoes decarboxylation. This is followed by membrane translocation and cleavage of the modified precursor. Post-translationally, the 2,3-didehydrobutyrine is determined to be the Z-isomer.

Lanthionine-containing peptide antibiotic (lantibiotic) active on Gram-positive bacteria. The bactericidal activity of lantibiotics is based on depolarization of energized bacterial cytoplasmic membranes, initiated by the formation of aqueous transmembrane pores. The chain is Lantibiotic epidermin (epiA) from Staphylococcus epidermidis.